Here is a 99-residue protein sequence, read N- to C-terminus: Phosphoribosyl-ATP pyrophosphatase (99 aa).

The protein belongs to the PRA-PH family.

It localises to the cytoplasm. The catalysed reaction is 1-(5-phospho-beta-D-ribosyl)-ATP + H2O = 1-(5-phospho-beta-D-ribosyl)-5'-AMP + diphosphate + H(+). The protein operates within amino-acid biosynthesis; L-histidine biosynthesis; L-histidine from 5-phospho-alpha-D-ribose 1-diphosphate: step 2/9. The polypeptide is Phosphoribosyl-ATP pyrophosphatase (Methanosphaerula palustris (strain ATCC BAA-1556 / DSM 19958 / E1-9c)).